Consider the following 433-residue polypeptide: Urokinase-type plasminogen activator (433 aa).

Residues 1–20 (MKVWLASLFLCALVVKNSEG) form the signal peptide. An EGF-like domain is found at 28–64 (DESNCGCQNGGVCVSYKYFSRIRRCSCPRKFQGEHCE). 6 cysteine pairs are disulfide-bonded: Cys-32–Cys-40, Cys-34–Cys-52, Cys-54–Cys-63, Cys-71–Cys-152, Cys-92–Cys-134, and Cys-123–Cys-147. The tract at residues 35–58 (QNGGVCVSYKYFSRIRRCSCPRKF) is binds urokinase plasminogen activator surface receptor. The Kringle domain maps to 71-152 (CYHGNGDSYR…FVQECMVHDC (82 aa)). Positions 153 to 179 (SLSKKPSSSVDQQGFQCGQKALRPRFK) are connecting peptide. Ser-159 carries the post-translational modification Phosphoserine. 6 disulfide bridges follow: Cys-169-Cys-301, Cys-211-Cys-227, Cys-219-Cys-290, Cys-315-Cys-384, Cys-347-Cys-363, and Cys-374-Cys-402. The 247-residue stretch at 180-426 (IVGGEFTEVE…FLDWIQSHIG (247 aa)) folds into the Peptidase S1 domain. Residues His-226 and Asp-277 each act as charge relay system in the active site. Catalysis depends on Ser-378, which acts as the Charge relay system.

Belongs to the peptidase S1 family. As to quaternary structure, found in high and low molecular mass forms. Each consists of two chains, A and B. The high molecular mass form contains a long chain A which is cleaved to yield a short chain A. Forms heterodimer with SERPINA5. Binds LRP1B; binding is followed by internalization and degradation. Interacts with MRC2. Interacts with PLAUR. In complex with SERPINE1, interacts with PLAUR/uPAR. Interacts with SORL1 and LRP1, either alone or in complex with SERPINE1; these interactions are abolished in the presence of LRPAP1/RAP. The ternary complex composed of PLAUR-PLAU-PAI1 also interacts with SORLA. Produced as an inactive single-chain protein (pro-uPA or sc-uPA), is processed into the active disulfide-linked two-chain form of PLAU/uPA by a proteolytic event mediated, at least, by TMPRSS4.

Its subcellular location is the secreted. The enzyme catalyses Specific cleavage of Arg-|-Val bond in plasminogen to form plasmin.. Inhibited by SERPINA5. Inhibited by SERPINE1. Specifically cleaves the zymogen plasminogen to form the active enzyme plasmin. The polypeptide is Urokinase-type plasminogen activator (Plau) (Mus musculus (Mouse)).